A 788-amino-acid chain; its full sequence is Autophagy-related protein 9 (788 aa).

Residues 1-171 (MTDKSTFLSV…EAYMYYTGKG (171 aa)) lie on the Cytoplasmic side of the membrane. The segment covering 32 to 42 (ILRRVEEEHAQ) has biased composition (basic and acidic residues). A disordered region spans residues 32-127 (ILRRVEEEHA…TGVANGGLPR (96 aa)). Over residues 44-58 (SDNSNSDNDSGNDSD) the composition is skewed to low complexity. Polar residues predominate over residues 101–112 (SFAQGTKTQTPI). The chain crosses the membrane as a helical span at residues 172-192 (LVSIILSRVLNMSTIMFVVVF). The Lumenal segment spans residues 193–222 (STYLGSCIDYSKIKGSRTLDEVHVKQCYAK). The helical transmembrane segment at 223–243 (LGSFHVFVLWTFFVLWFMKLF) threads the bilayer. The Cytoplasmic portion of the chain corresponds to 244–390 (QYVKDIRRLV…QILSTGLRRR (147 aa)). Phenylalanine 391 is an intramembrane region. Topologically, residues 392-479 (VFAAIMNVVF…PKEKTALVSK (88 aa)) are cytoplasmic. The helical transmembrane segment at 480 to 500 (FVSFIAGSFAAVLGIASLIDP) threads the bilayer. Residues 501-512 (ELFLMFEISANR) lie on the Lumenal side of the membrane. A helical transmembrane segment spans residues 513–533 (TVLFYIGVFGSILAVSRSLIP). The Cytoplasmic portion of the chain corresponds to 534-579 (EETLVFDPEISLRYVAEFTHYLPPEWEGKLHTEQVKNEFSLMYEMR). Residues 580 to 600 (LIILLKELASIFLAPFILYYS) lie within the membrane without spanning it. The Cytoplasmic portion of the chain corresponds to 601–788 (LTQSCDDIVD…KKTDNMNLGA (188 aa)). The segment at 715–736 (LSPAAPTATTATSGTATGAAPR) is disordered. Residues 716–734 (SPAAPTATTATSGTATGAA) show a composition bias toward low complexity.

This sequence belongs to the ATG9 family. In terms of assembly, homotrimer; forms a homotrimer with a central pore that forms a path between the two membrane leaflets. Post-translationally, phosphorylated by ATG1. ATG1 phosphorylation is required for preautophagosome elongation.

The protein resides in the preautophagosomal structure membrane. It localises to the cytoplasmic vesicle membrane. It is found in the golgi apparatus membrane. Its subcellular location is the endoplasmic reticulum membrane. The enzyme catalyses a 1,2-diacyl-sn-glycero-3-phosphocholine(in) = a 1,2-diacyl-sn-glycero-3-phosphocholine(out). It carries out the reaction a 1,2-diacyl-sn-glycero-3-phospho-L-serine(in) = a 1,2-diacyl-sn-glycero-3-phospho-L-serine(out). It catalyses the reaction a 1,2-diacyl-sn-glycero-3-phosphoethanolamine(in) = a 1,2-diacyl-sn-glycero-3-phosphoethanolamine(out). The catalysed reaction is a 1,2-diacyl-sn-glycero-3-phospho-(1D-myo-inositol-3-phosphate)(in) = a 1,2-diacyl-sn-glycero-3-phospho-(1D-myo-inositol-3-phosphate)(out). Phospholipid scramblase involved in autophagy and cytoplasm to vacuole transport (Cvt) vesicle formation. Cycles between the preautophagosomal structure/phagophore assembly site (PAS) and the cytoplasmic vesicle pool and supplies membrane for the growing autophagosome. Lipid scramblase activity plays a key role in preautophagosomal structure/phagophore assembly by distributing the phospholipids that arrive through ATG2 from the cytoplasmic to the luminal leaflet of the bilayer, thereby driving autophagosomal membrane expansion. Required for mitophagy. Also involved in endoplasmic reticulum-specific autophagic process and is essential for the survival of cells subjected to severe ER stress. Different machineries are required for anterograde trafficking to the PAS during either the Cvt pathway or bulk autophagy and for retrograde trafficking. This chain is Autophagy-related protein 9, found in Yarrowia lipolytica (strain CLIB 122 / E 150) (Yeast).